The following is a 252-amino-acid chain: 3-deoxy-manno-octulosonate cytidylyltransferase (252 aa).

Belongs to the KdsB family.

The protein resides in the cytoplasm. It carries out the reaction 3-deoxy-alpha-D-manno-oct-2-ulosonate + CTP = CMP-3-deoxy-beta-D-manno-octulosonate + diphosphate. It participates in nucleotide-sugar biosynthesis; CMP-3-deoxy-D-manno-octulosonate biosynthesis; CMP-3-deoxy-D-manno-octulosonate from 3-deoxy-D-manno-octulosonate and CTP: step 1/1. The protein operates within bacterial outer membrane biogenesis; lipopolysaccharide biosynthesis. Functionally, activates KDO (a required 8-carbon sugar) for incorporation into bacterial lipopolysaccharide in Gram-negative bacteria. This Xylella fastidiosa (strain Temecula1 / ATCC 700964) protein is 3-deoxy-manno-octulosonate cytidylyltransferase.